The sequence spans 424 residues: MLGACGMQRYHQEALKKNRVMLARELVLKELMEHMIEKDIITIEMVEMIQAKSGSFSQNVEFLNLLPKRGPNAFSAFCEALQETKQQHLAEMILKTESSLRHGIATLEQRYGSNLPLPLSESCNSKRPRLIVEHSLDSGDGPPIPPVKHCTPEFYRDHQHLAYKLISEPRGLALILSNIHFSSEKDLEYRSGGDVDCASLELLFKHLGYQVTVFHDQSAEEMESALERFSKLPDHQDVDSCIVALLSHGVEGGVYGTDGKLLQLQEAFRLFDNANCPNLQNKPKMFFIQACRGDETDRGVDQRDGKERSDSPGCEESDANKEENLKLRLPTRSDMICGYACLKGTAAMRNTKRGSWYIEALTTVFAEDSRDTHVADMLVKVNRQIKQREGYAPGTEFHRCKEMSEYCSTLCRDLYLFPGYVPGK.

A propeptide spanning residues Met1–Asp140 is cleaved from the precursor. The CARD domain occupies Met7–Thr96. Catalysis depends on residues His248 and Cys291. Residues Thr296–Asp310 show a composition bias toward basic and acidic residues. A disordered region spans residues Thr296–Leu325.

It belongs to the peptidase C14A family. Heterotetramer that consists of two anti-parallel arranged heterodimers, each one formed by a p18 subunit and a p12 subunit.

It carries out the reaction Strict requirement for an Asp residue at P1, with 316-Asp being essential for proteolytic activity and has a preferred cleavage sequence of Val-Asp-Val-Ala-Asp-|-.. Functionally, involved in the activation cascade of caspases responsible for apoptosis execution. Might function by either activating some proteins required for cell death or inactivating proteins necessary for cell survival. This chain is Caspase-2 (CASP2), found in Gallus gallus (Chicken).